Consider the following 662-residue polypeptide: DNA ligase (662 aa).

Residues 34–38 (DYEYD), 83–84 (SI), and Glu-113 each bind NAD(+). Lys-115 serves as the catalytic N6-AMP-lysine intermediate. Residues Arg-136, Glu-172, Lys-286, and Lys-310 each coordinate NAD(+). Cys-404, Cys-407, Cys-422, and Cys-427 together coordinate Zn(2+). A BRCT domain is found at 583–662 (KSGSTCFGKA…EAFTNLIHLE (80 aa)).

It belongs to the NAD-dependent DNA ligase family. LigA subfamily. Mg(2+) serves as cofactor. Mn(2+) is required as a cofactor.

It catalyses the reaction NAD(+) + (deoxyribonucleotide)n-3'-hydroxyl + 5'-phospho-(deoxyribonucleotide)m = (deoxyribonucleotide)n+m + AMP + beta-nicotinamide D-nucleotide.. In terms of biological role, DNA ligase that catalyzes the formation of phosphodiester linkages between 5'-phosphoryl and 3'-hydroxyl groups in double-stranded DNA using NAD as a coenzyme and as the energy source for the reaction. It is essential for DNA replication and repair of damaged DNA. In Chlamydia pneumoniae (Chlamydophila pneumoniae), this protein is DNA ligase.